A 103-amino-acid chain; its full sequence is Histone H4 (103 aa).

The span at 1–14 shows a compositional bias: gly residues; the sequence is MSGRGKGGKGLGKG. The tract at residues 1–20 is disordered; sequence MSGRGKGGKGLGKGGAKRHR. Serine 2 carries the post-translational modification N-acetylserine. N6-acetyllysine is present on lysine 17. The DNA-binding element occupies 17–21; the sequence is KRHRK. Lysine 21 is subject to N6-methyllysine.

The protein belongs to the histone H4 family. In terms of assembly, the nucleosome is a histone octamer containing two molecules each of H2A, H2B, H3 and H4 assembled in one H3-H4 heterotetramer and two H2A-H2B heterodimers. The octamer wraps approximately 147 bp of DNA.

The protein localises to the nucleus. It localises to the chromosome. In terms of biological role, core component of nucleosome. Nucleosomes wrap and compact DNA into chromatin, limiting DNA accessibility to the cellular machineries which require DNA as a template. Histones thereby play a central role in transcription regulation, DNA repair, DNA replication and chromosomal stability. DNA accessibility is regulated via a complex set of post-translational modifications of histones, also called histone code, and nucleosome remodeling. In Eucalyptus globulus (Tasmanian blue gum), this protein is Histone H4.